Reading from the N-terminus, the 192-residue chain is UPF0301 protein Jann_3896 (192 aa).

It belongs to the UPF0301 (AlgH) family.

This Jannaschia sp. (strain CCS1) protein is UPF0301 protein Jann_3896.